The following is a 1590-amino-acid chain: Defective chorion protein, FC177 isoform (1590 aa).

A signal peptide spans 1 to 19; it reads MRLFSLLPLLALLVVQAAG. Disordered stretches follow at residues 23-60, 184-212, and 268-294; these read VTSD…PSIN, APAP…PDAP, and PAQP…EDPY. A compositionally biased stretch (polar residues) spans 32–41; it reads AGSTTNSTTD. A compositionally biased stretch (low complexity) spans 268–280; the sequence is PAQPAAAGTDAQA. Tandem repeats lie at residues 493–518, 519–544, 545–570, 571–596, and 597–622. The tract at residues 493-788 is 12 X 26 AA approximate tandem repeats, Glu, Met-rich; that stretch reads QNPMMMQQRQ…IQQQQRQMMQ (296 aa). A 6; approximate repeat occupies 623–652; that stretch reads QNPMMMQQRQWSEEQAKIQHDQQMAQQMAQ. Residues 653 to 680 form a 7; approximate repeat; sequence QGLMMTEQRQRQWSEDQAKIQQAQQMAQ. The stretch at 681–696 is one 8; approximate repeat; that stretch reads QTPMMMPQMQQRQWTE. The 9; approximate repeat unit spans residues 697-720; sequence DPQMVQQMQQRQWAEDQTRMQMAQ. The 10; approximate repeat unit spans residues 721–733; it reads QNPMMQQQRQMAE. Residues 734 to 758 form an 11; approximate repeat; it reads NPQMMQQRQWSEEQTKIEQAQQMAQ. The stretch at 759–788 is one 12; approximate repeat; the sequence is QNQMMMQQMQQRQWSEDQAQIQQQQRQMMQ. Disordered regions lie at residues 843-875, 944-983, 1119-1221, 1261-1352, 1375-1515, and 1538-1590; these read GPQM…SKSA, RTIN…EHRV, EEDA…TKSI, PVTE…DDNN, FAQG…QATV, and EKKS…QTKA. The segment covering 957 to 977 has biased composition (polar residues); the sequence is SESQKSNSNPPTTLTPAPQEQ. Residues 1119 to 1130 show a composition bias toward acidic residues; the sequence is EEDAQQEPMEEE. The segment covering 1131–1148 has biased composition (basic and acidic residues); it reads QLQHDPNTEPQYNHKDFV. The segment covering 1151–1195 has biased composition (low complexity); that stretch reads TTSTASPITSTTEAATPTGSDSTSEATVTPEVTTTTSTSTTTTTE. Residues 1205–1221 show a composition bias toward polar residues; it reads QQDSQAEAESSHVTKSI. Over residues 1272–1288 the composition is skewed to basic and acidic residues; it reads EPSKQEDKPKVEEKVIA. A compositionally biased stretch (acidic residues) spans 1295–1306; the sequence is EQEEELEEDEDS. 2 stretches are compositionally biased toward low complexity: residues 1307-1319 and 1435-1452; these read TSIS…PSPS and DSGS…TPSP. Over residues 1493–1504 the composition is skewed to basic residues; it reads QRPKKSMSKPKK. Positions 1505-1515 are enriched in low complexity; the sequence is QSSQVTTQATV. The span at 1554 to 1576 shows a compositional bias: basic residues; the sequence is TKPKSIKPVKVIKRKRLRRRQHK. Polar residues predominate over residues 1577 to 1590; it reads SIATTIRSPIQTKA.

Its subcellular location is the secreted. In terms of biological role, required for proper assembly of the eggshell. The polypeptide is Defective chorion protein, FC177 isoform (Drosophila melanogaster (Fruit fly)).